Here is a 426-residue protein sequence, read N- to C-terminus: Serine hydroxymethyltransferase 1 (426 aa).

(6S)-5,6,7,8-tetrahydrofolate-binding positions include Leu121 and Gly125–Leu127. An N6-(pyridoxal phosphate)lysine modification is found at Lys230. Ser355–Phe357 serves as a coordination point for (6S)-5,6,7,8-tetrahydrofolate.

It belongs to the SHMT family. As to quaternary structure, homodimer. Pyridoxal 5'-phosphate is required as a cofactor.

It localises to the cytoplasm. It carries out the reaction (6R)-5,10-methylene-5,6,7,8-tetrahydrofolate + glycine + H2O = (6S)-5,6,7,8-tetrahydrofolate + L-serine. It functions in the pathway one-carbon metabolism; tetrahydrofolate interconversion. The protein operates within amino-acid biosynthesis; glycine biosynthesis; glycine from L-serine: step 1/1. In terms of biological role, catalyzes the reversible interconversion of serine and glycine with tetrahydrofolate (THF) serving as the one-carbon carrier. This reaction serves as the major source of one-carbon groups required for the biosynthesis of purines, thymidylate, methionine, and other important biomolecules. Also exhibits THF-independent aldolase activity toward beta-hydroxyamino acids, producing glycine and aldehydes, via a retro-aldol mechanism. The protein is Serine hydroxymethyltransferase 1 of Hahella chejuensis (strain KCTC 2396).